A 446-amino-acid polypeptide reads, in one-letter code: Probable glycine dehydrogenase (decarboxylating) subunit 1 (446 aa).

The protein belongs to the GcvP family. N-terminal subunit subfamily. The glycine cleavage system is composed of four proteins: P, T, L and H. In this organism, the P 'protein' is a heterodimer of two subunits.

It carries out the reaction N(6)-[(R)-lipoyl]-L-lysyl-[glycine-cleavage complex H protein] + glycine + H(+) = N(6)-[(R)-S(8)-aminomethyldihydrolipoyl]-L-lysyl-[glycine-cleavage complex H protein] + CO2. Its function is as follows. The glycine cleavage system catalyzes the degradation of glycine. The P protein binds the alpha-amino group of glycine through its pyridoxal phosphate cofactor; CO(2) is released and the remaining methylamine moiety is then transferred to the lipoamide cofactor of the H protein. The protein is Probable glycine dehydrogenase (decarboxylating) subunit 1 of Desulfitobacterium hafniense (strain DSM 10664 / DCB-2).